Reading from the N-terminus, the 197-residue chain is Small ribosomal subunit protein uS4c (197 aa).

An S4 RNA-binding domain is found at 85-161 (MRLDNILFRL…TGKELANHLN (77 aa)).

It belongs to the universal ribosomal protein uS4 family. As to quaternary structure, part of the 30S ribosomal subunit. Contacts protein S5. The interaction surface between S4 and S5 is involved in control of translational fidelity.

The protein localises to the plastid. In terms of biological role, one of the primary rRNA binding proteins, it binds directly to 16S rRNA where it nucleates assembly of the body of the 30S subunit. Its function is as follows. With S5 and S12 plays an important role in translational accuracy. The chain is Small ribosomal subunit protein uS4c (rps4) from Cuscuta sandwichiana (Kauna'oa).